A 118-amino-acid polypeptide reads, in one-letter code: Neutral phospholipase A2 homolog taipoxin beta chain 2 (118 aa).

Cystine bridges form between Cys-11/Cys-71, Cys-27/Cys-117, Cys-29/Cys-45, Cys-44/Cys-98, Cys-51/Cys-91, Cys-60/Cys-84, and Cys-78/Cys-89.

Belongs to the phospholipase A2 family. Group I subfamily. D49 sub-subfamily. Heterotrimer of alpha, beta, and gamma chains; non-covalently linked. Expressed by the venom gland.

Its subcellular location is the secreted. In terms of biological role, heterotrimer: Snake venom phospholipase A2 (PLA2) heterotrimer that acts as a potent presynaptic neurotoxin by blocking synaptic transmission and synaptic vesicle recycling. May act by binding in a calcium-dependent fashion to neurotonal pentraxin-1 (NPTX1) and neurotonal pentraxin-2 (NPTX2), but not to neuronal pentraxin receptor (NPTXR). Also binds to taipoxin-associated calcium binding protein 49 (RCN2), a protein localized in the lumen of endoplasmic reticulum. Monomer (beta chain): Snake venom phospholipase A2 homolog that is neither toxic nor enzymatically active. Does not bind calcium. In Oxyuranus scutellatus scutellatus (Australian taipan), this protein is Neutral phospholipase A2 homolog taipoxin beta chain 2.